The sequence spans 678 residues: Methionine--tRNA ligase (678 aa).

The 'HIGH' region signature appears at 12-22; the sequence is PYANGPIHLGH. Positions 143, 146, 156, and 159 each coordinate Zn(2+). The short motif at 328–332 is the 'KMSKS' region element; that stretch reads KMSKS. Lys-331 contacts ATP. Residues 577-678 form the tRNA-binding domain; sequence DFSKVDLRIA…SGAQPGMRVK (102 aa).

This sequence belongs to the class-I aminoacyl-tRNA synthetase family. MetG type 1 subfamily. As to quaternary structure, homodimer. It depends on Zn(2+) as a cofactor.

It is found in the cytoplasm. It catalyses the reaction tRNA(Met) + L-methionine + ATP = L-methionyl-tRNA(Met) + AMP + diphosphate. Its function is as follows. Is required not only for elongation of protein synthesis but also for the initiation of all mRNA translation through initiator tRNA(fMet) aminoacylation. The polypeptide is Methionine--tRNA ligase (Acidithiobacillus ferrooxidans (strain ATCC 23270 / DSM 14882 / CIP 104768 / NCIMB 8455) (Ferrobacillus ferrooxidans (strain ATCC 23270))).